The primary structure comprises 285 residues: Dihydropteroate synthase (285 aa).

A Pterin-binding domain is found at 25–271 (TLVMGILNVT…DVKQIARMAK (247 aa)). Residue Asn-32 participates in Mg(2+) binding. (7,8-dihydropterin-6-yl)methyl diphosphate is bound by residues Thr-72, Asp-106, Asn-125, Asp-189, Lys-225, and 259–261 (RVH).

The protein belongs to the DHPS family. It depends on Mg(2+) as a cofactor.

It carries out the reaction (7,8-dihydropterin-6-yl)methyl diphosphate + 4-aminobenzoate = 7,8-dihydropteroate + diphosphate. The protein operates within cofactor biosynthesis; tetrahydrofolate biosynthesis; 7,8-dihydrofolate from 2-amino-4-hydroxy-6-hydroxymethyl-7,8-dihydropteridine diphosphate and 4-aminobenzoate: step 1/2. In terms of biological role, catalyzes the condensation of para-aminobenzoate (pABA) with 6-hydroxymethyl-7,8-dihydropterin diphosphate (DHPt-PP) to form 7,8-dihydropteroate (H2Pte), the immediate precursor of folate derivatives. The polypeptide is Dihydropteroate synthase (sul) (Bacillus subtilis (strain 168)).